The sequence spans 51 residues: Cytochrome b559 subunit beta (51 aa).

A helical transmembrane segment spans residues 26–42; that stretch reads WLAVHALAVPTVFFIGS. Residue His-30 coordinates heme.

It belongs to the PsbE/PsbF family. In terms of assembly, heterodimer of an alpha subunit and a beta subunit. PSII is composed of 1 copy each of membrane proteins PsbA, PsbB, PsbC, PsbD, PsbE, PsbF, PsbH, PsbI, PsbJ, PsbK, PsbL, PsbM, PsbT, PsbY, PsbZ, Psb30/Ycf12, at least 3 peripheral proteins of the oxygen-evolving complex and a large number of cofactors. It forms dimeric complexes. Heme b is required as a cofactor.

The protein localises to the plastid. It localises to the chloroplast thylakoid membrane. Its function is as follows. This b-type cytochrome is tightly associated with the reaction center of photosystem II (PSII). PSII is a light-driven water:plastoquinone oxidoreductase that uses light energy to abstract electrons from H(2)O, generating O(2) and a proton gradient subsequently used for ATP formation. It consists of a core antenna complex that captures photons, and an electron transfer chain that converts photonic excitation into a charge separation. In Bigelowiella natans (Pedinomonas minutissima), this protein is Cytochrome b559 subunit beta.